We begin with the raw amino-acid sequence, 443 residues long: Clustered-asparagine-rich protein (443 aa).

The RRM 1 domain maps to 16-106; the sequence is TKLHIQNIPP…RNIDAKFAVP (91 aa). The interval 253–279 is disordered; that stretch reads NHLNNNNNNINNNNNNNNNNNNNNNVM. Positions 256–277 are enriched in low complexity; sequence NNNNNNINNNNNNNNNNNNNNN. One can recognise an RRM 2 domain in the interval 342-435; the sequence is SSITIMKKQN…KYLKVQLKKG (94 aa).

The chain is Clustered-asparagine-rich protein from Plasmodium falciparum.